Consider the following 326-residue polypeptide: uncharacterized protein (326 aa).

Tyr-53 acts as the Proton donor in catalysis. Residue 215 to 225 (SPLAGGLLGGK) coordinates NADP(+). The stretch at 242-305 (IEKHRLQLEK…AVEISLDKEI (64 aa)) forms a coiled coil.

The protein belongs to the aldo/keto reductase family. Aldo/keto reductase 2 subfamily.

This is an uncharacterized protein from Bacillus subtilis (strain 168).